We begin with the raw amino-acid sequence, 595 residues long: Isoprene synthase, chloroplastic (595 aa).

Residues 1-37 constitute a chloroplast transit peptide; that stretch reads MATELLCLHRPISLTHKLFRNPLPKVIQATPLTLKLR. D345 contacts dimethylallyl diphosphate. Mg(2+) contacts are provided by D345 and D349. Positions 345 to 349 match the DDXXD motif motif; sequence DDIYD. 3 residues coordinate dimethylallyl diphosphate: E423, R486, and N489. Positions 489, 493, and 497 each coordinate Mg(2+).

This sequence belongs to the terpene synthase family. Tpsb subfamily. In terms of assembly, homodimer. Requires Mg(2+) as cofactor. Mn(2+) is required as a cofactor.

The protein resides in the plastid. It is found in the chloroplast. The enzyme catalyses dimethylallyl diphosphate = isoprene + diphosphate. It functions in the pathway secondary metabolite biosynthesis; terpenoid biosynthesis. Its activity is regulated as follows. Competitive inhibition is mediated by geranyl diphosphate (GPP). In terms of biological role, lyase that catalyzes the formation of isoprene from dimethylallyl diphosphate via a syn-periplanar elimination mechanism in which the diphosphate-leaving group serves as a general base. The polypeptide is Isoprene synthase, chloroplastic (Populus canescens (Grey poplar)).